A 437-amino-acid chain; its full sequence is Doublesex- and mab-3-related transcription factor A2 (437 aa).

A DNA-binding region (DM) is located at residues 49-96 (CARCRNHGVVSALKGHKRYCRWKDCMCAKCTLIAERQRVMAAQVALRR). 2 disordered regions span residues 163–254 (SVTP…ARQR) and 297–317 (DKSEETWSRDGALPSIQPSVS). Low complexity-rich tracts occupy residues 179 to 201 (SESVSGSAPGASSPEARPGSGSE) and 223 to 235 (SPSSISPLGSESG). The 36-residue stretch at 254–289 (RTPIDILTRVFPAQKRSVLELVLQGCGGDVVQAIEQ) folds into the DMA domain.

It belongs to the DMRT family.

It localises to the nucleus. Functionally, may be involved in sexual development. In Xenopus tropicalis (Western clawed frog), this protein is Doublesex- and mab-3-related transcription factor A2 (dmrta2).